A 240-amino-acid chain; its full sequence is Ribonuclease HII (240 aa).

The 190-residue stretch at 21–210 folds into the RNase H type-2 domain; it reads GLVAGVDEAG…VAAAVQRTVV (190 aa). A divalent metal cation contacts are provided by Asp27, Glu28, and Asp119.

Belongs to the RNase HII family. The cofactor is Mn(2+). Mg(2+) is required as a cofactor.

The protein resides in the cytoplasm. It catalyses the reaction Endonucleolytic cleavage to 5'-phosphomonoester.. Its function is as follows. Endonuclease that specifically degrades the RNA of RNA-DNA hybrids. The sequence is that of Ribonuclease HII from Paracidovorax citrulli (strain AAC00-1) (Acidovorax citrulli).